We begin with the raw amino-acid sequence, 2920 residues long: Cadherin-related hmr-1 (2920 aa).

Positions 1-19 (MSWNILLILLISNLDEVLA) are cleaved as a signal peptide. At 20-2779 (KTLLKLPSNA…AVSKLGISSP (2760 aa)) the chain is on the extracellular side. Residues Asn72, Asn243, Asn253, Asn339, and Asn508 are each glycosylated (N-linked (GlcNAc...) asparagine). Cadherin domains are found at residues 322-422 (SSRS…PPSF), 425-530 (SPLP…PPQF), 531-642 (AKQE…VPTF), 643-747 (TRPL…SAVF), 749-865 (PTSQ…KPEF), 871-979 (YSDI…SPQF), 980-1093 (ERPS…APKW), 1097-1211 (PDCK…VPQF), 1212-1335 (TVDL…APSF), 1336-1436 (EEQK…APQF), 1438-1546 (QQKY…SPIF), 1548-1661 (ERLF…APFF), 1662-1772 (EKTR…APHI), and 1772-1874 (IHGA…EPYT). 4 N-linked (GlcNAc...) asparagine glycosylation sites follow: Asn658, Asn685, Asn715, and Asn826. N-linked (GlcNAc...) asparagine glycosylation is present at Asn1177. N-linked (GlcNAc...) asparagine glycosylation occurs at Asn1417. N-linked (GlcNAc...) asparagine glycosylation is present at Asn1646. 3 N-linked (GlcNAc...) asparagine glycosylation sites follow: Asn1935, Asn2224, and Asn2232. Residues 2246–2283 (APPACQHSLCHNDGVCHNTNPGFFCECRNDGLKGARCQ) form the EGF-like 1 domain. Intrachain disulfides connect Cys2250–Cys2261, Cys2255–Cys2270, and Cys2272–Cys2282. The 195-residue stretch at 2284–2478 (GTTRSFGGNG…AFEQNSEKGC (195 aa)) folds into the Laminin G-like domain. 2 N-linked (GlcNAc...) asparagine glycosylation sites follow: Asn2307 and Asn2332. 3 disulfide bridges follow: Cys2452/Cys2478, Cys2501/Cys2515, and Cys2517/Cys2526. The 36-residue stretch at 2492–2527 (SLNHCIHGDCFADVQGSGAMVAKCVCDPGWGGARCE) folds into the EGF-like 2 domain. N-linked (GlcNAc...) asparagine glycosylation occurs at Asn2623. Residues 2780-2800 (AIILILVSLALLILLVMMMVV) form a helical membrane-spanning segment. The Cytoplasmic segment spans residues 2801–2920 (YTRRSPGAFE…VTLESIESAQ (120 aa)). Ser2839 is modified (phosphoserine). The disordered stretch occupies residues 2858-2891 (IGGHPPHYPPRGMAPPKDDHELNSKIKDLETDQN). Basic and acidic residues predominate over residues 2873–2887 (PKDDHELNSKIKDLE). Ser2909 carries the phosphoserine modification. Thr2912 is subject to Phosphothreonine. Phosphoserine is present on residues Ser2915 and Ser2918.

In terms of assembly, monomer in solution. Isoform a is a component of a core catenin-cadherin complex consisting of hmr-1, hmp-1 and hmp-2; the complex localizes to adherens junctions. Isoform a interacts with hmp-2; the interaction is direct. Isoform a interacts (via intracellular domain) with jac-1. Phosphorylation at T-2912 increases the binding affinity for hmp-2. In terms of processing, sumoylated. Sumoylation prevents accumulation at adherens junctions and decreases the binding affinity for hmp-2. As to expression, expressed in epidermal cells (at protein level). Neuron-specific.

Its subcellular location is the cell membrane. The protein resides in the cell junction. It localises to the adherens junction. It is found in the cell projection. The protein localises to the dendrite. Its function is as follows. Cadherins are calcium-dependent cell adhesion proteins. They preferentially interact with themselves in a homophilic manner in connecting cells; cadherins may thus contribute to the sorting of heterogeneous cell types. Required for adherens junction assembly and connecting adherens junctions to the cytoskeleton. Functionally, isoform a is required for cell migration during body enclosure and cell shape changes during body elongation. Required for proper localization of other junctional components, such as hmp-1, hmp-2, jac-1 and pac-1. Recruitment of pac-1 is required to establish cell polarity, independent of its role in cell adhesion. Required for primodial germ cell ingression and adherence to endodermal cells during gastrulation. Isoform b is involved in axonal guidance in a subset of motor neurons. This is Cadherin-related hmr-1 from Caenorhabditis elegans.